The primary structure comprises 95 residues: Integration host factor subunit beta (95 aa).

This sequence belongs to the bacterial histone-like protein family. Heterodimer of an alpha and a beta chain.

Its function is as follows. This protein is one of the two subunits of integration host factor, a specific DNA-binding protein that functions in genetic recombination as well as in transcriptional and translational control. The protein is Integration host factor subunit beta of Paracoccus denitrificans (strain Pd 1222).